Reading from the N-terminus, the 157-residue chain is Transcriptional repressor NrdR (157 aa).

The tract at residues 1-24 (MRCPKCGGNKSSVVDSRQAEDGNT) is disordered. A zinc finger spans residues 3 to 34 (CPKCGGNKSSVVDSRQAEDGNTIRRRRECEEC). An ATP-cone domain is found at 49–139 (LVVVKKDGTR…VYRSFKDVGE (91 aa)).

The protein belongs to the NrdR family. The cofactor is Zn(2+).

Its function is as follows. Negatively regulates transcription of bacterial ribonucleotide reductase nrd genes and operons by binding to NrdR-boxes. The protein is Transcriptional repressor NrdR of Streptococcus sanguinis (strain SK36).